Reading from the N-terminus, the 275-residue chain is Large ribosomal subunit protein uL2 (275 aa).

The disordered stretch occupies residues 221–275; the sequence is RGMTMNPVDHPMGGGEGRSKGHIPQSPWGIPAKGYKTRKSKKPSDKLIVKRRKQK.

Belongs to the universal ribosomal protein uL2 family. As to quaternary structure, part of the 50S ribosomal subunit. Forms a bridge to the 30S subunit in the 70S ribosome.

Its function is as follows. One of the primary rRNA binding proteins. Required for association of the 30S and 50S subunits to form the 70S ribosome, for tRNA binding and peptide bond formation. It has been suggested to have peptidyltransferase activity; this is somewhat controversial. Makes several contacts with the 16S rRNA in the 70S ribosome. This Kosmotoga olearia (strain ATCC BAA-1733 / DSM 21960 / TBF 19.5.1) protein is Large ribosomal subunit protein uL2.